Here is a 1051-residue protein sequence, read N- to C-terminus: Ubiquitin-activating enzyme E1 2 (1051 aa).

Residues 1–32 are compositionally biased toward basic and acidic residues; the sequence is MLPRKREIVAGEVEDLQKKTRAGEGEATREEG. The segment at 1-42 is disordered; it reads MLPRKREIVAGEVEDLQKKTRAGEGEATREEGDAAMAGRGNE. A run of 2 repeats spans residues 56-194 and 453-605. The interval 56–605 is 2 approximate repeats; that stretch reads GRETMKPLFG…GAKCNTQMVI (550 aa). Residues alanine 472, aspartate 498, arginine 509, lysine 522, and 570-571 each bind ATP; that span reads DN. The active-site Glycyl thioester intermediate is the cysteine 626.

The protein belongs to the ubiquitin-activating E1 family. As to quaternary structure, monomer.

The catalysed reaction is ATP + ubiquitin + [E1 ubiquitin-activating enzyme]-L-cysteine = AMP + diphosphate + S-ubiquitinyl-[E1 ubiquitin-activating enzyme]-L-cysteine.. Its pathway is protein modification; protein ubiquitination. In terms of biological role, activates ubiquitin by first adenylating its C-terminal glycine residue with ATP, and thereafter linking this residue to the side chain of a cysteine residue in E1, yielding a ubiquitin-E1 thioester and free AMP. The protein is Ubiquitin-activating enzyme E1 2 (UBA2) of Triticum aestivum (Wheat).